The following is a 148-amino-acid chain: MF7 protein (148 aa).

The polypeptide is MF7 protein (Myxoma virus (strain Lausanne) (MYXV)).